Reading from the N-terminus, the 516-residue chain is Maturase K (516 aa).

Belongs to the intron maturase 2 family. MatK subfamily.

The protein localises to the plastid. It localises to the chloroplast. Usually encoded in the trnK tRNA gene intron. Probably assists in splicing its own and other chloroplast group II introns. The sequence is that of Maturase K from Disporum sessile (Japanese fairy bells).